A 1396-amino-acid chain; its full sequence is Sterol 3-beta-glucosyltransferase (1396 aa).

A compositionally biased stretch (basic and acidic residues) spans 1–16 (MRPFIDDAKRRAERRL). 4 disordered regions span residues 1 to 21 (MRPF…ASRQ), 40 to 64 (DADD…MQYM), 83 to 196 (ARFD…RAAP), and 209 to 232 (ETEN…KKSQ). Basic and acidic residues predominate over residues 94-107 (ETRTRPRFLSEKPF). The segment covering 186-196 (RPRSATPRAAP) has biased composition (low complexity). One can recognise a GRAM 1 domain in the interval 238–273 (RQLMEMFRFPTPEKVVVEYACSLLQSMLLQGYMYVT). The PH domain maps to 289 to 388 (RVIKSGYIYK…WVRALQKVIF (100 aa)). Disordered stretches follow at residues 460 to 532 (GTPT…SSSS) and 571 to 627 (TIHT…ESKD). Composition is skewed to polar residues over residues 484–532 (GSQN…SSSS) and 571–584 (TIHT…GTAR). Basic and acidic residues predominate over residues 588–602 (RHSDEITRSTTEHGL). A GRAM 2 domain is found at 717–783 (ERFRAHFALP…HDIENVEKEK (67 aa)). The UDP-alpha-D-glucose site is built by Ser-905, Arg-906, Asp-908, Ala-1208, His-1210, His-1223, Gly-1227, Thr-1228, Asp-1247, and Gln-1248. Over residues 1324-1343 (SSISSTPFSPTPSTKTSDDQ) the composition is skewed to low complexity. Residues 1324–1346 (SSISSTPFSPTPSTKTSDDQNAN) form a disordered region.

It belongs to the glycosyltransferase 28 family.

The protein localises to the cytoplasm. Its subcellular location is the preautophagosomal structure membrane. The catalysed reaction is a sterol + UDP-alpha-D-glucose = a sterol 3-beta-D-glucoside + UDP + H(+). It catalyses the reaction ergosterol + UDP-alpha-D-glucose = ergosteryl 3-beta-D-glucoside + UDP + H(+). Sterol glycosyltransferase responsible for the glycosylation of ergosterol to form ergosterol-glucoside. This is Sterol 3-beta-glucosyltransferase from Emericella nidulans (strain FGSC A4 / ATCC 38163 / CBS 112.46 / NRRL 194 / M139) (Aspergillus nidulans).